Consider the following 159-residue polypeptide: Crossover junction endodeoxyribonuclease RuvC (159 aa).

Residues D7, E67, and D139 contribute to the active site. Positions 7, 67, and 139 each coordinate Mg(2+).

The protein belongs to the RuvC family. Homodimer which binds Holliday junction (HJ) DNA. The HJ becomes 2-fold symmetrical on binding to RuvC with unstacked arms; it has a different conformation from HJ DNA in complex with RuvA. In the full resolvosome a probable DNA-RuvA(4)-RuvB(12)-RuvC(2) complex forms which resolves the HJ. The cofactor is Mg(2+).

It is found in the cytoplasm. The catalysed reaction is Endonucleolytic cleavage at a junction such as a reciprocal single-stranded crossover between two homologous DNA duplexes (Holliday junction).. Its function is as follows. The RuvA-RuvB-RuvC complex processes Holliday junction (HJ) DNA during genetic recombination and DNA repair. Endonuclease that resolves HJ intermediates. Cleaves cruciform DNA by making single-stranded nicks across the HJ at symmetrical positions within the homologous arms, yielding a 5'-phosphate and a 3'-hydroxyl group; requires a central core of homology in the junction. The consensus cleavage sequence is 5'-(A/T)TT(C/G)-3'. Cleavage occurs on the 3'-side of the TT dinucleotide at the point of strand exchange. HJ branch migration catalyzed by RuvA-RuvB allows RuvC to scan DNA until it finds its consensus sequence, where it cleaves and resolves the cruciform DNA. In Orientia tsutsugamushi (strain Boryong) (Rickettsia tsutsugamushi), this protein is Crossover junction endodeoxyribonuclease RuvC.